The following is a 666-amino-acid chain: ATP synthase subunit alpha 2 (666 aa).

An ATP-binding site is contributed by 182–189; that stretch reads GDRATGKT. Positions 527-666 are disordered; sequence MPAEDAAGDI…DAEAEARHKR (140 aa). Residues 545–590 are compositionally biased toward basic and acidic residues; it reads ARGDADRDADHGANREVSREVSPEASREVSREVSCEVSHEADRDAA. Residues 591–601 show a composition bias toward low complexity; sequence ADAARVAGRAP. A compositionally biased stretch (basic and acidic residues) spans 623–641; sequence ADGDRASASRPRPDARGDA.

This sequence belongs to the ATPase alpha/beta chains family. As to quaternary structure, F-type ATPases have 2 components, CF(1) - the catalytic core - and CF(0) - the membrane proton channel. CF(1) has five subunits: alpha(3), beta(3), gamma(1), delta(1), epsilon(1). CF(0) has three main subunits: a(1), b(2) and c(9-12). The alpha and beta chains form an alternating ring which encloses part of the gamma chain. CF(1) is attached to CF(0) by a central stalk formed by the gamma and epsilon chains, while a peripheral stalk is formed by the delta and b chains.

It localises to the cell inner membrane. The enzyme catalyses ATP + H2O + 4 H(+)(in) = ADP + phosphate + 5 H(+)(out). In terms of biological role, produces ATP from ADP in the presence of a proton gradient across the membrane. The alpha chain is a regulatory subunit. The chain is ATP synthase subunit alpha 2 from Burkholderia pseudomallei (strain 1106a).